A 137-amino-acid polypeptide reads, in one-letter code: Large ribosomal subunit protein uL16c (137 aa).

It belongs to the universal ribosomal protein uL16 family. As to quaternary structure, part of the 50S ribosomal subunit.

The protein resides in the plastid. The protein localises to the chloroplast. This Rhodomonas salina (Cryptomonas salina) protein is Large ribosomal subunit protein uL16c.